The chain runs to 313 residues: ADP-L-glycero-D-manno-heptose-6-epimerase (313 aa).

Residues 10-11, 31-32, Lys38, Lys53, 75-79, and Asn92 contribute to the NADP(+) site; these read MI, DN, and EGACS. Residue Tyr139 is the Proton acceptor of the active site. Lys143 serves as a coordination point for NADP(+). Asn174 is a binding site for substrate. Residues Val175 and Lys183 each coordinate NADP(+). Lys183 acts as the Proton acceptor in catalysis. Residues Ser185, His192, 206–209, Arg214, and Tyr277 each bind substrate; that span reads FEGS.

It belongs to the NAD(P)-dependent epimerase/dehydratase family. HldD subfamily. As to quaternary structure, homopentamer. NADP(+) serves as cofactor.

The catalysed reaction is ADP-D-glycero-beta-D-manno-heptose = ADP-L-glycero-beta-D-manno-heptose. The protein operates within nucleotide-sugar biosynthesis; ADP-L-glycero-beta-D-manno-heptose biosynthesis; ADP-L-glycero-beta-D-manno-heptose from D-glycero-beta-D-manno-heptose 7-phosphate: step 4/4. Catalyzes the interconversion between ADP-D-glycero-beta-D-manno-heptose and ADP-L-glycero-beta-D-manno-heptose via an epimerization at carbon 6 of the heptose. This Aliivibrio fischeri (strain ATCC 700601 / ES114) (Vibrio fischeri) protein is ADP-L-glycero-D-manno-heptose-6-epimerase.